The following is a 691-amino-acid chain: ATP-dependent zinc metalloprotease FtsH 2 (691 aa).

A disordered region spans residues 1–48; that stretch reads MTDEPQSDEQQTTEQERPLGTKRATRADGLRRPGVRSGLAERRSPAAD. Residues 1 to 64 lie on the Cytoplasmic side of the membrane; sequence MTDEPQSDEQ…AAVRRFLLRD (64 aa). The segment covering 14–31 has biased composition (basic and acidic residues); the sequence is EQERPLGTKRATRADGLR. Residues 65-85 form a helical membrane-spanning segment; sequence VFALGLMIAALVIVILFFTLL. Residues 86–168 lie on the Extracellular side of the membrane; sequence GATKPTSSGT…AVKQQPGKAQ (83 aa). The chain crosses the membrane as a helical span at residues 169-189; sequence VTIVVQFLLPILLLVCLFALF. Residues 190–691 are Cytoplasmic-facing; that stretch reads MRIGQDGGAG…ERGSARDRDA (502 aa). Position 265 to 272 (265 to 272) interacts with ATP; the sequence is GPPGTGKT. Histidine 486 lines the Zn(2+) pocket. Glutamate 487 is an active-site residue. Histidine 490 and aspartate 563 together coordinate Zn(2+).

This sequence in the central section; belongs to the AAA ATPase family. It in the C-terminal section; belongs to the peptidase M41 family. Homohexamer. Zn(2+) is required as a cofactor.

Its subcellular location is the cell membrane. In terms of biological role, acts as a processive, ATP-dependent zinc metallopeptidase for both cytoplasmic and membrane proteins. Plays a role in the quality control of integral membrane proteins. This is ATP-dependent zinc metalloprotease FtsH 2 from Conexibacter woesei (strain DSM 14684 / CCUG 47730 / CIP 108061 / JCM 11494 / NBRC 100937 / ID131577).